A 291-amino-acid chain; its full sequence is Shikimate dehydrogenase (NADP(+)) (291 aa).

Residues 14-16 and Thr-61 contribute to the shikimate site; that span reads SKS. Lys-65 serves as the catalytic Proton acceptor. Glu-77 contributes to the NADP(+) binding site. The shikimate site is built by Asn-86 and Asp-102. NADP(+) contacts are provided by residues 139-143, 164-169, and Leu-232; these read GAGGA and NRTFSR. Tyr-234 contacts shikimate. Gly-256 provides a ligand contact to NADP(+).

It belongs to the shikimate dehydrogenase family. Homodimer.

It carries out the reaction shikimate + NADP(+) = 3-dehydroshikimate + NADPH + H(+). The protein operates within metabolic intermediate biosynthesis; chorismate biosynthesis; chorismate from D-erythrose 4-phosphate and phosphoenolpyruvate: step 4/7. Functionally, involved in the biosynthesis of the chorismate, which leads to the biosynthesis of aromatic amino acids. Catalyzes the reversible NADPH linked reduction of 3-dehydroshikimate (DHSA) to yield shikimate (SA). In Blochmanniella pennsylvanica (strain BPEN), this protein is Shikimate dehydrogenase (NADP(+)).